We begin with the raw amino-acid sequence, 176 residues long: Magnesium-dependent phosphatase 1 (176 aa).

Asp11 (nucleophile) is an active-site residue. Asp11 lines the Mg(2+) pocket. Phosphate is bound by residues Leu12 and Asp13. Asp13 provides a ligand contact to Mg(2+). Asp13 (proton donor) is an active-site residue. Residue Trp20 participates in substrate binding. Positions 69, 70, and 100 each coordinate phosphate. Arg70 serves as a coordination point for substrate. Position 123 (Asp123) interacts with Mg(2+).

Belongs to the HAD-like hydrolase superfamily. It depends on Mg(2+) as a cofactor.

It carries out the reaction O-phospho-L-tyrosyl-[protein] + H2O = L-tyrosyl-[protein] + phosphate. Inhibited by vanadate and zinc, and slightly by calcium. Its function is as follows. Magnesium-dependent phosphatase which may act as a tyrosine phosphatase. The polypeptide is Magnesium-dependent phosphatase 1 (MDP1) (Homo sapiens (Human)).